The primary structure comprises 565 residues: MNIFKRISSLILSKLDKLKQGVSSVTNFIVEPPSNRAHGDIYTNIAMVLAKHEKKKPVEIAEVLAKEFALFDEIARVEIAGPGFINMHLKIEVWHGILEQINELKTEFGTLNIGNNQAINVEFVSANPTGPLHIGHARGAVFGDVLTNLLKKVGYRVTKEYYINDAGAQIDTLVRSVYLRYKEALGEKISIEKGLYPGEYLKPIGEELAKKYGRELLEKQDNRVIREYTLSSILELIKEGMNLLGVSHDVFTSEYELQKSGKIEKSIKLLSDKGLVYEGYLEKPKSKESENWTSRKEMLFRSTEFGDDVDRALKKEDGSWTYFASDIAYHFDKISRGFNNMIVALGSDHGGYIKRLKAVISALSDNQAKIEVKLHNVVNFFENGKPVKMSKRSGNFLTVRDVVEEVGRDITRFIMLTRKNDMVLDFDFTKVKEQSKDNPIFYVQYAHVRAHSLMRNAPKELPKANPSLLKTNGELFLIKTLAKWPDVVETAARLCEPHRITFYLLEVAEAFHILWGYGKSDLNMRFILEDNPNLTAARMFLVQALVHVIASGLSMFNIEPLEEMK.

The 'HIGH' region motif lies at 126–136; sequence ANPTGPLHIGH.

This sequence belongs to the class-I aminoacyl-tRNA synthetase family. As to quaternary structure, monomer.

It is found in the cytoplasm. It catalyses the reaction tRNA(Arg) + L-arginine + ATP = L-arginyl-tRNA(Arg) + AMP + diphosphate. The polypeptide is Arginine--tRNA ligase (Wolbachia sp. subsp. Brugia malayi (strain TRS)).